The sequence spans 245 residues: Probable ABC transporter permease protein HI_0355 (245 aa).

6 helical membrane-spanning segments follow: residues leucine 9–proline 29, isoleucine 61–phenylalanine 81, isoleucine 92–phenylalanine 112, glycine 115–cysteine 135, leucine 170–valine 190, and phenylalanine 217–leucine 237. Positions leucine 50 to isoleucine 234 constitute an ABC transmembrane type-1 domain.

The protein belongs to the binding-protein-dependent transport system permease family. CysTW subfamily.

The protein resides in the cell inner membrane. Its function is as follows. Probably part of a binding-protein-dependent transport system. Probably responsible for the translocation of the substrate across the membrane. The polypeptide is Probable ABC transporter permease protein HI_0355 (Haemophilus influenzae (strain ATCC 51907 / DSM 11121 / KW20 / Rd)).